The primary structure comprises 2671 residues: MSEMSSFLHIGDIVSLYAEGSVNGFISTLGLVDDRCVVEPAAGDLDNPPKKFRDCLFKVCPMNRYSAQKQYWKAKQTKQDKEKIADVVLLQKLQHAAQMEQKQNDTENKKVHGDVVKYGSVIQLLHMKSNKYLTVNKRLPALLEKNAMRVTLDATGNEGSWLFIQPFWKLRSNGDNVVVGDKVILNPVNAGQPLHASNYELSDNAGCKEVNSVNCNTSWKINLFMQFRDHLEEVLKGGDVVRLFHAEQEKFLTCDEYKGKLQVFLRTTLRQSATSATSSNALWEVEVVHHDPCRGGAGHWNGLYRFKHLATGNYLAAEENPSYKGDASDPKAAGMGAQGRTGRRNAGEKIKYCLVAVPHGNDIASLFELDPTTLQKTDSFVPRNSYVRLRHLCTNTWIQSTNVPIDIEEERPIRLMLGTCPTKEDKEAFAIVSVPVSEIRDLDFANDASSMLASAVEKLNEGFISQNDRRFVIQLLEDLVFFVSDVPNNGQNVLDIMVTKPNRERQKLMREQNILKQVFGILKAPFREKGGEGPLVRLEELSDQKNAPYQHMFRLCYRVLRHSQEDYRKNQEHIAKQFGMMQSQIGYDILAEDTITALLHNNRKLLEKHITKTEVETFVSLVRKNREPRFLDYLSDLCVSNHIAIPVTQELICKCVLDPKNSDILIRTELRPVKEMAQSHEYLSIEYSEEEVWLTWTDKNNEHHEKSVRQLAQEARAGNAHDENVLSYYRYQLKLFARMCLDRQYLAIDEISQQLGVDLIFLCMADEMLPFDLRASFCHLMLHVHVDRDPQELVTPVKFARLWTEIPTAITIKDYDSNLNASRDDKKNKFANTMEFVEDYLNNVVSEAVPFANEEKNKLTFEVVSLAHNLIYFGFYSFSELLRLTRTLLGIIDCVQGPPAMLQAYEDPGGKNVRRSIQGVGHMMSTMVLSRKQSVFSAPSLSAGASAAEPLDRSKFEENEDIVVMETKLKILEILQFILNVRLDYRISYLLSVFKKEFVEVFPMQDSGADGTAPAFDSTTANMNLDRIGEQAEAMFGVGKTSSMLEVDDEGGRMFLRVLIHLTMHDYAPLVSGALQLLFKHFSQRQEAMHTFKQVQLLISAQDVENYKVIKSELDRLRTMVEKSELWVDKKGSGKGEEVEAGAAKDKKERPTDEEGFLHPPGEKSSENYQIVKGILERLNKMCGVGEQMRKKQQRLLKNMDAHKVMLDLLQIPYDKGDAKMMEILRYTHQFLQKFCAGNPGNQALLHKHLHLFLTPGLLEAETMQHIFLNNYQLCSEISEPVLQHFVHLLATHGRHVQYLDFLHTVIKAEGKYVKKCQDMIMTELTNAGDDVVVFYNDKASLAHLLDMMKAARDGVEDHSPLMYHISLVDLLAACAEGKNVYTEIKCTSLLPLEDVVSVVTHEDCITEVKMAYVNFVNHCYVDTEVEMKEIYTSNHIWTLFENFTLDMARVCSKREKRVADPTLEKYVLSVVLDTINAFFSSPFSENSTSLQTHQTIVVQLLQSTTRLLECPWLQQQHKGSVEACIRTLAMVAKGRAILLPMDLDAHISSMLSSGASCAAAAQRNASSYKATTRAFPRVTPTANQWDYKNIIEKLQDIITALEERLKPLVQAELSVLVDVLHWPELLFLEGSEAYQRCESGGFLSKLIQHTKDLMESEEKLCIKVLRTLQQMLLKKTKYGDRGNQLRKMLLQNYLQNRKSTSRGDLPDPIGTGLDPDWSAIAATQCRLDKEGATKLVCDLITSTKNEKIFQESIGLAIHLLDGGNTEIQKSFHNLMMSDKKSERFFKVLHDRMKRAQQETKSTVAVNMNDLGSQPHEDREPVDPTTKGRVASFSIPGSSSRYSLGPSLRRGHEVSERVQSSEMGTSVLIMQPILRFLQLLCENHNRDLQNFLRCQNNKTNYNLVCETLQFLDIMCGSTTGGLGLLGLYINEDNVGLVIQTLETLTEYCQGPCHENQTCIVTHESNGIDIITALILNDISPLCKYRMDLVLQLKDNASKLLLALMESRHDSENAERILISLRPQELVDVIKKAYLQEEERENSEVSPREVGHNIYILALQLSRHNKQLQHLLKPVKRIQEEEAEGISSMLSLNNKQLSQMLKSSAPAQEEEEDPLAYYENHTSQIEIVRQDRSMEQIVFPVPGICQFLTEETKHRLFTTTEQDEQGSKVSDFFDQSSFLHNEMEWQRKLRSMPLIYWFSRRMTLWGSISFNLAVFINIIIAFFYPYMEGASTGVLDSPLISLLFWILICFSIAALFTKRYSIRPLIVALILRSIYYLGIGPTLNILGALNLTNKIVFVVSFVGNRGTFIRGYKAMVMDMEFLYHVGYILTSVLGLFAHELFYSILLFDLIYREETLFNVIKSVTRNGRSILLTALLALILVYLFSIVGFLFLKDDFILEVDRLPNNHSTASPLGMPHGAAAFVDTCSGDKMDCVSGLSVPEVLEEDRELDSTERACDTLLMCIVTVMNHGLRNGGGVGDILRKPSKDESLFPARVVYDLLFFFIVIIIVLNLIFGVIIDTFADLRSEKQKKEEILKTTCFICGLERDKFDNKTVSFEEHIKLEHNMWNYLYFIVLVRVKNKTDYTGPESYVAQMIKNKNLDWFPRMRAMSLVSNEGEGEQNEIRILQDKLNSTMKLVSHLTAQLNELKEQMTEQRKRRQRLGFVDVQNCISR.

Residues 1 to 2202 lie on the Cytoplasmic side of the membrane; that stretch reads MSEMSSFLHI…LIYWFSRRMT (2202 aa). MIR domains are found at residues 113-173, 174-224, 232-288, 295-372, and 378-434; these read GDVV…LRSN, GDNV…INLF, EEVL…VEVV, GGAG…LDPT, and DSFV…IVSV. Arginine 266, threonine 268, leucine 269, and arginine 270 together coordinate 1D-myo-inositol 1,4,5-trisphosphate. The segment at 322–342 is disordered; sequence SYKGDASDPKAAGMGAQGRTG. Arginine 503, lysine 507, arginine 510, tyrosine 567, arginine 568, and lysine 569 together coordinate 1D-myo-inositol 1,4,5-trisphosphate. A Ca(2+)-binding site is contributed by arginine 743. Phosphoserine is present on residues serine 916 and serine 934. Residues glutamate 1122 and glutamate 1125 each contribute to the Ca(2+) site. Disordered regions lie at residues 1132–1163 and 1809–1848; these read GSGK…PPGE and NDLG…GPSL. Phosphoserine occurs at positions 1813, 1832, and 1834. Residues glutamate 1882 and glutamate 1946 each coordinate Ca(2+). ATP is bound by residues alanine 1996, glutamate 2149, and lysine 2152. Residues 2203–2223 form a helical membrane-spanning segment; sequence LWGSISFNLAVFINIIIAFFY. Residues 2224-2235 lie on the Extracellular side of the membrane; sequence PYMEGASTGVLD. Residues 2236 to 2256 form a helical membrane-spanning segment; sequence SPLISLLFWILICFSIAALFT. At 2257-2264 the chain is on the cytoplasmic side; sequence KRYSIRPL. A helical transmembrane segment spans residues 2265–2285; it reads IVALILRSIYYLGIGPTLNIL. Residues 2286 to 2325 are Extracellular-facing; the sequence is GALNLTNKIVFVVSFVGNRGTFIRGYKAMVMDMEFLYHVG. A helical membrane pass occupies residues 2326–2346; it reads YILTSVLGLFAHELFYSILLF. Residues 2347–2368 lie on the Cytoplasmic side of the membrane; it reads DLIYREETLFNVIKSVTRNGRS. A helical transmembrane segment spans residues 2369–2389; the sequence is ILLTALLALILVYLFSIVGFL. Residues 2390–2496 are Extracellular-facing; the sequence is FLKDDFILEV…ESLFPARVVY (107 aa). Cysteine 2455 and cysteine 2461 are oxidised to a cystine. Residues 2497–2517 form a helical membrane-spanning segment; sequence DLLFFFIVIIIVLNLIFGVII. Residues 2518 to 2671 lie on the Cytoplasmic side of the membrane; the sequence is DTFADLRSEK…FVDVQNCISR (154 aa). Positions 2538 and 2539 each coordinate ATP. Residue cysteine 2538 coordinates Zn(2+). Cysteine 2541 and histidine 2558 together coordinate Zn(2+). Residues lysine 2560, histidine 2563, asparagine 2564, and methionine 2565 each coordinate ATP. Histidine 2563 lines the Zn(2+) pocket. Threonine 2581 serves as a coordination point for Ca(2+). Phosphoserine occurs at positions 2609 and 2670.

This sequence belongs to the InsP3 receptor family. Homotetramer. Homodimer. Interacts with TRPC1, TRPC3 and TRPC4. Interacts with TRPV4. Interacts with SIGMAR1. Interacts with PML and AKT1. Interacts with IRAG2 (via coiled-coil domain). Interacts with CABP1. Interacts with TMBIM4/LFG4. Interacts with CEMIP. Interacts with TESPA1. Interacts with TMEM203. Interacts with BOK; regulates ITPR3 expression. Interacts with BCL2L10. Interacts with CHGA and CHGB. Post-translationally, phosphorylated by AKT1 on serine and/or threonine residues. As to expression, expressed in intestinal crypt and villus epithelial cells.

Its subcellular location is the endoplasmic reticulum membrane. It is found in the cytoplasmic vesicle. It localises to the secretory vesicle membrane. It catalyses the reaction Ca(2+)(in) = Ca(2+)(out). Inositol 1,4,5-trisphosphate-gated calcium channel is regulated by cytosolic calcium in a biphasic manner. At low concentrations, cytosolic calcium binds at a high-affinity juxtamembrane domain (JD) calcium binding site, allowing ITPR3 to activate by escaping a low-energy resting state through an ensemble of preactivated states. At high cytosolic calcium concentrations, ITPR3 preferentially enters an inhibited state stabilized by calcium binding at a second, low-affinity cytoplasmic domain (CD) calcium binding site. Its function is as follows. Inositol 1,4,5-trisphosphate-gated calcium channel that, upon 1D-myo-inositol 1,4,5-trisphosphate binding, transports calcium from the endoplasmic reticulum lumen to cytoplasm, thus releasing the intracellular calcium and therefore participates in cellular calcium ion homeostasis. 1D-myo-inositol 1,4,5-trisphosphate binds to the ligand-free channel without altering its global conformation, yielding the low-energy resting state, then progresses through resting-to preactivated transitions to the higher energy preactivated state, which increases affinity for calcium, promoting binding of the low basal cytosolic calcium at the juxtamembrane domain (JD) site, favoring the transition through the ensemble of high-energy intermediate states along the trajectory to the fully-open activated state. Upon opening, releases calcium in the cytosol where it can bind to the low-affinity cytoplasmic domain (CD) site and stabilizes the inhibited state to terminate calcium release. The protein is Inositol 1,4,5-trisphosphate-gated calcium channel ITPR3 of Homo sapiens (Human).